Reading from the N-terminus, the 330-residue chain is Probable WRKY transcription factor 74 (330 aa).

Positions 256 to 322 form a DNA-binding region, WRKY; that stretch reads KIADIPPDEY…YEGEHNHSRI (67 aa).

It is found in the nucleus. Its function is as follows. Transcription factor. Interacts specifically with the W box (5'-(T)TGAC[CT]-3'), a frequently occurring elicitor-responsive cis-acting element. The protein is Probable WRKY transcription factor 74 (WRKY74) of Arabidopsis thaliana (Mouse-ear cress).